A 931-amino-acid polypeptide reads, in one-letter code: Histone-lysine N-methyltransferase EZ1 (931 aa).

The span at 1–30 (MEAEAAAAVVASSASASASAGRSRPSSSAA) shows a compositional bias: low complexity. Disordered stretches follow at residues 1 to 37 (MEAE…SNSA), 372 to 450 (PTHS…ITNR), and 491 to 549 (RNGN…YDSS). Residues 375-385 (SSDNVMNQPGS) are compositionally biased toward polar residues. Residues 386-398 (NRKKNGSSGRKTK) show a composition bias toward basic residues. Over residues 423–433 (SNKSPQHSPSP) the composition is skewed to polar residues. The segment covering 500-509 (SSQQSSPSTR) has biased composition (low complexity). The segment covering 528 to 549 (AHNDSTEEANNRHSATDGYDSS) has biased composition (basic and acidic residues). The 51-residue stretch at 565 to 615 (YLRSWKAIEQGLLVKGLEIFGRNSCLIARNLLGGMKTCKDVFQYMNYIENN) folds into the SANT domain. Residues 664 to 763 (FKRITERKDQ…TLGVPNQRGD (100 aa)) enclose the CXC domain. The region spanning 778–893 (QRVLLGRSDV…AGEELFYDYR (116 aa)) is the SET domain. The segment covering 903 to 915 (ARKPEASGAKDDG) has biased composition (basic and acidic residues). Residues 903–931 (ARKPEASGAKDDGQPFNGRAKKLAQNNRG) are disordered.

This sequence belongs to the class V-like SAM-binding methyltransferase superfamily. Histone-lysine methyltransferase family. EZ subfamily. In terms of tissue distribution, widely expressed.

It localises to the nucleus. It catalyses the reaction L-lysyl(27)-[histone H3] + 3 S-adenosyl-L-methionine = N(6),N(6),N(6)-trimethyl-L-lysyl(27)-[histone H3] + 3 S-adenosyl-L-homocysteine + 3 H(+). In terms of biological role, polycomb group (PcG) protein. Catalytic subunit of some PcG multiprotein complex, which methylates 'Lys-27' of histone H3, leading to transcriptional repression of the affected target genes. PcG proteins are not required to initiate repression, but to maintain it during later stages of development. The chain is Histone-lysine N-methyltransferase EZ1 (EZ1) from Zea mays (Maize).